We begin with the raw amino-acid sequence, 188 residues long: Adrenodoxin, mitochondrial (188 aa).

Residues 1-64 constitute a mitochondrion transit peptide; sequence MAAAPGARLL…RPLSVSARAR (64 aa). S67 is modified (phosphoserine). In terms of domain architecture, 2Fe-2S ferredoxin-type spans 69–175; the sequence is DKITVHFKNR…NMTVRVPEAV (107 aa). K70 carries the post-translational modification N6-acetyllysine; alternate. An N6-succinyllysine; alternate modification is found at K70. 4 residues coordinate [2Fe-2S] cluster: C110, C116, C119, and C156. Position 162 is an N6-succinyllysine (K162). S181 is subject to Phosphoserine.

The protein belongs to the adrenodoxin/putidaredoxin family. As to quaternary structure, interacts with CYP11A1. The cofactor is [2Fe-2S] cluster.

It localises to the mitochondrion matrix. Its function is as follows. Essential for the synthesis of various steroid hormones, participates in the reduction of mitochondrial cytochrome P450 for steroidogenesis. Transfers electrons from adrenodoxin reductase to CYP11A1, a cytochrome P450 that catalyzes cholesterol side-chain cleavage. Does not form a ternary complex with adrenodoxin reductase and CYP11A1 but shuttles between the two enzymes to transfer electrons. The chain is Adrenodoxin, mitochondrial (Fdx1) from Mus musculus (Mouse).